Here is a 259-residue protein sequence, read N- to C-terminus: Zinc import ATP-binding protein ZnuC (259 aa).

Residues 22 to 238 (VEARGLTVRR…PEYRALFGAH (217 aa)) enclose the ABC transporter domain. 54-61 (GPNGSGKS) serves as a coordination point for ATP.

Belongs to the ABC transporter superfamily. Zinc importer (TC 3.A.1.15.5) family. In terms of assembly, the complex is composed of two ATP-binding proteins (ZnuC), two transmembrane proteins (ZnuB) and a solute-binding protein (ZnuA).

The protein localises to the cell inner membrane. It catalyses the reaction Zn(2+)(out) + ATP(in) + H2O(in) = Zn(2+)(in) + ADP(in) + phosphate(in) + H(+)(in). In terms of biological role, part of the ABC transporter complex ZnuABC involved in zinc import. Responsible for energy coupling to the transport system. This Alkalilimnicola ehrlichii (strain ATCC BAA-1101 / DSM 17681 / MLHE-1) protein is Zinc import ATP-binding protein ZnuC.